A 144-amino-acid chain; its full sequence is MEKTFFMIKPDGVRRGLIGEVLQRIERRGFTLDALQLVTPSREHLDEHYHQLKDKAFYPGLIDYMMSGPILIGVISGNEVIESWRTMMGKTNPKDAAPGTIRGDFAQAPDENGEMMNVVHGSDSRDSAKREIELWLGHLTAENK.

The ATP site is built by Lys9, Phe57, Arg85, Thr91, Arg102, and Asn112. His120 (pros-phosphohistidine intermediate) is an active-site residue.

This sequence belongs to the NDK family. In terms of assembly, homotetramer. Mg(2+) serves as cofactor.

Its subcellular location is the cytoplasm. It catalyses the reaction a 2'-deoxyribonucleoside 5'-diphosphate + ATP = a 2'-deoxyribonucleoside 5'-triphosphate + ADP. The enzyme catalyses a ribonucleoside 5'-diphosphate + ATP = a ribonucleoside 5'-triphosphate + ADP. Functionally, major role in the synthesis of nucleoside triphosphates other than ATP. The ATP gamma phosphate is transferred to the NDP beta phosphate via a ping-pong mechanism, using a phosphorylated active-site intermediate. The polypeptide is Nucleoside diphosphate kinase (Streptococcus uberis (strain ATCC BAA-854 / 0140J)).